An 84-amino-acid chain; its full sequence is MDVGNQILEPKNLKRNSGKLRNILKRISGNGIIKERKRRLGKNAPLENSKLVQQVKRNVNVGYATKKDTMRMSAQKRTTKRLKP.

The interval 62–84 (GYATKKDTMRMSAQKRTTKRLKP) is disordered.

This is an uncharacterized protein from Soybean chlorotic mottle virus.